A 123-amino-acid polypeptide reads, in one-letter code: Large ribosomal subunit protein eL8 (123 aa).

This sequence belongs to the eukaryotic ribosomal protein eL8 family. As to quaternary structure, part of the 50S ribosomal subunit. Probably part of the RNase P complex.

The protein resides in the cytoplasm. Its function is as follows. Multifunctional RNA-binding protein that recognizes the K-turn motif in ribosomal RNA, the RNA component of RNase P, box H/ACA, box C/D and box C'/D' sRNAs. This chain is Large ribosomal subunit protein eL8, found in Pyrococcus abyssi (strain GE5 / Orsay).